Here is a 473-residue protein sequence, read N- to C-terminus: Putative BTB/POZ domain-containing protein R765 (473 aa).

In terms of domain architecture, BTB spans 2–72 (TNIQLVIKDD…KIYDREITAD (71 aa)).

This sequence belongs to the mimivirus BTB/WD family.

The polypeptide is Putative BTB/POZ domain-containing protein R765 (Acanthamoeba polyphaga mimivirus (APMV)).